The following is a 227-amino-acid chain: Lipoprotein-releasing system ATP-binding protein LolD (227 aa).

An ABC transporter domain is found at 7 to 227 (LSCRDLGKSY…HLQEGHLVAI (221 aa)). 43-50 (GTSGSGKS) contacts ATP.

The protein belongs to the ABC transporter superfamily. Lipoprotein translocase (TC 3.A.1.125) family. As to quaternary structure, the complex is composed of two ATP-binding proteins (LolD) and two transmembrane proteins (LolC and LolE).

Its subcellular location is the cell inner membrane. Functionally, part of the ABC transporter complex LolCDE involved in the translocation of mature outer membrane-directed lipoproteins, from the inner membrane to the periplasmic chaperone, LolA. Responsible for the formation of the LolA-lipoprotein complex in an ATP-dependent manner. The sequence is that of Lipoprotein-releasing system ATP-binding protein LolD from Pseudomonas fluorescens (strain ATCC BAA-477 / NRRL B-23932 / Pf-5).